A 164-amino-acid chain; its full sequence is ATP synthase subunit b 1 (164 aa).

Residues 8–28 traverse the membrane as a helical segment; the sequence is PETWVAIAFVILMGLFAYLGV.

The protein belongs to the ATPase B chain family. F-type ATPases have 2 components, F(1) - the catalytic core - and F(0) - the membrane proton channel. F(1) has five subunits: alpha(3), beta(3), gamma(1), delta(1), epsilon(1). F(0) has three main subunits: a(1), b(2) and c(10-14). The alpha and beta chains form an alternating ring which encloses part of the gamma chain. F(1) is attached to F(0) by a central stalk formed by the gamma and epsilon chains, while a peripheral stalk is formed by the delta and b chains.

The protein resides in the cell inner membrane. F(1)F(0) ATP synthase produces ATP from ADP in the presence of a proton or sodium gradient. F-type ATPases consist of two structural domains, F(1) containing the extramembraneous catalytic core and F(0) containing the membrane proton channel, linked together by a central stalk and a peripheral stalk. During catalysis, ATP synthesis in the catalytic domain of F(1) is coupled via a rotary mechanism of the central stalk subunits to proton translocation. Its function is as follows. Component of the F(0) channel, it forms part of the peripheral stalk, linking F(1) to F(0). This Bradyrhizobium sp. (strain ORS 278) protein is ATP synthase subunit b 1.